The primary structure comprises 735 residues: MSDSKCPVTGKSSRQVAGGGTSNRDWWPNQLNLQILHQQSTKSNPMGEGFNYRQEFTMLDLAAVKKDLVALMTDSQDWWPADWGHYGGLMIRMAWHSAGTYRMGDGRGGAGSGSQRLAPLNSWPDNVNLDKARRLLWPVKQKYGRKISWADLMILAGNCALESMGFKTFGFGGGREDIWEPQEDVYWGGEKEWLATSDKPYSRYSGERDLDNPLAAVQMGLIYINPEGPDGNPDPVASGRDVRETFARMAMNDEETVALVAGGHTFGKCHGAGTADHVGPEPEAAPLEAQGLGWISSYKSGKGGDTISSGIEGAWKPNPTTWDMGYLKVLFKYEWELVKSPAGAHQWLAKDVADEDMVVDAHDPAKKRRPMMTTADLSLRFDPAYEKIARRYLANPDEFADAFARAWFKLTHRDMGPRSRYLGPEVPAEELIWQDPVPAATHELINNSDVADLKVTILATGLSISQLVTTAWASASTFRGSDKRGGANGARIRLAPQKDWEVNQPGQLAKVLETLAAVQQEFNAAQSGNKRVSLADLIVLGGCAAVEQAARNAGQTVAVPFTPGRTDASQEQTDTASFEVLEPKADGFRNYQKEKYAVSAEELLVDRAQLLTLTAPEMTVLIGGMRVLNANFGNARHGVFTKRPEALTNDFFVNLLDMATIWKATSEDQDLFEGRDRTSGELKWTATRVDLIFGSNSQLRAIAEVYGCEDSQEKFLQDFAAAWDKVMQADRFELV.

The tract at residues 1–25 (MSDSKCPVTGKSSRQVAGGGTSNRD) is disordered. A cross-link (tryptophyl-tyrosyl-methioninium (Trp-Tyr) (with M-249)) is located at residues 95–223 (WHSAGTYRMG…LAAVQMGLIY (129 aa)). The active-site Proton acceptor is H96. A cross-link (tryptophyl-tyrosyl-methioninium (Tyr-Met) (with W-95)) is located at residues 223–249 (YINPEGPDGNPDPVASGRDVRETFARM). Position 264 (H264) interacts with heme b.

It belongs to the peroxidase family. Peroxidase/catalase subfamily. In terms of assembly, homodimer or homotetramer. Heme b serves as cofactor. Post-translationally, formation of the three residue Trp-Tyr-Met cross-link is important for the catalase, but not the peroxidase activity of the enzyme.

The enzyme catalyses H2O2 + AH2 = A + 2 H2O. It carries out the reaction 2 H2O2 = O2 + 2 H2O. In terms of biological role, bifunctional enzyme with both catalase and broad-spectrum peroxidase activity. This Trichlorobacter lovleyi (strain ATCC BAA-1151 / DSM 17278 / SZ) (Geobacter lovleyi) protein is Catalase-peroxidase.